Consider the following 445-residue polypeptide: Sporulation-specific glucan 1,3-beta-glucosidase (445 aa).

The first 21 residues, 1 to 21 (MVSFRGLTTLTLLFTKLVNCN), serve as a signal peptide directing secretion. Asparagine 201 carries an N-linked (GlcNAc...) asparagine glycan. Glutamate 233 functions as the Proton donor in the catalytic mechanism. The Nucleophile role is filled by glutamate 335.

Belongs to the glycosyl hydrolase 5 (cellulase A) family.

Its subcellular location is the secreted. The enzyme catalyses Successive hydrolysis of beta-D-glucose units from the non-reducing ends of (1-&gt;3)-beta-D-glucans, releasing alpha-glucose.. In terms of biological role, probably involved in the processes of spore formation and contributes to ascospore thermoresistance by participating in the morphogenesis of ascospore walls. The enzyme may do this by modifying glucan linkages in the developing ascospore wall, thus strengthening it or lending it plasticity. This chain is Sporulation-specific glucan 1,3-beta-glucosidase (SPR1), found in Saccharomyces cerevisiae (strain ATCC 204508 / S288c) (Baker's yeast).